Reading from the N-terminus, the 861-residue chain is Conserved oligomeric Golgi complex subunit 4 (861 aa).

The protein belongs to the COG4 family. In terms of assembly, component of the conserved oligomeric Golgi (COG or Sec34/Sec35) complex which consists of eight different proteins COG1-COG8.

The protein resides in the golgi apparatus membrane. In terms of biological role, acts as essential component of the peripheral membrane COG complex that is involved in intra-Golgi protein trafficking. COG is located at the cis-Golgi, and regulates tethering of retrograde intra-Golgi vesicles and possibly a number of other membrane trafficking events. Possesses ATPase activity. The sequence is that of Conserved oligomeric Golgi complex subunit 4 (COG4) from Saccharomyces cerevisiae (strain ATCC 204508 / S288c) (Baker's yeast).